Here is a 214-residue protein sequence, read N- to C-terminus: Adenylate kinase (214 aa).

10-15 is a binding site for ATP; it reads GAGKGT. An NMP region spans residues 30 to 59; the sequence is STGDLLREEIANNTELGKQAKKLIDGGNLV. AMP is bound by residues T31, R36, 57 to 59, 83 to 86, and Q90; these read NLV and GFPR. The segment at 124–161 is LID; sequence LRRQCKNCGNIFNLRFIKNFDGKCPKCGSTDIYQRADD. R125 provides a ligand contact to ATP. Residues C128 and C131 each contribute to the Zn(2+) site. 134–135 serves as a coordination point for ATP; it reads IF. Zn(2+) contacts are provided by C147 and C150. Residues R158 and R169 each contribute to the AMP site. K197 serves as a coordination point for ATP.

The protein belongs to the adenylate kinase family. As to quaternary structure, monomer.

It localises to the cytoplasm. It catalyses the reaction AMP + ATP = 2 ADP. Its pathway is purine metabolism; AMP biosynthesis via salvage pathway; AMP from ADP: step 1/1. In terms of biological role, catalyzes the reversible transfer of the terminal phosphate group between ATP and AMP. Plays an important role in cellular energy homeostasis and in adenine nucleotide metabolism. This chain is Adenylate kinase, found in Elusimicrobium minutum (strain Pei191).